The sequence spans 363 residues: Chorismate synthase (363 aa).

Position 48 (Arg48) interacts with NADP(+). FMN contacts are provided by residues 125 to 127 (RSS), 238 to 239 (NA), Gly278, 293 to 297 (KPTAS), and Arg319.

It belongs to the chorismate synthase family. In terms of assembly, homotetramer. Requires FMNH2 as cofactor.

The catalysed reaction is 5-O-(1-carboxyvinyl)-3-phosphoshikimate = chorismate + phosphate. The protein operates within metabolic intermediate biosynthesis; chorismate biosynthesis; chorismate from D-erythrose 4-phosphate and phosphoenolpyruvate: step 7/7. In terms of biological role, catalyzes the anti-1,4-elimination of the C-3 phosphate and the C-6 proR hydrogen from 5-enolpyruvylshikimate-3-phosphate (EPSP) to yield chorismate, which is the branch point compound that serves as the starting substrate for the three terminal pathways of aromatic amino acid biosynthesis. This reaction introduces a second double bond into the aromatic ring system. This chain is Chorismate synthase, found in Acinetobacter baumannii (strain AB0057).